Reading from the N-terminus, the 913-residue chain is Auxilin (913 aa).

At Met1 the chain carries N-acetylmethionine. Repeat copies occupy residues Asn36 to Asp39, Asn40 to Asp43, and Thr44 to Asp47. The segment at Asn36 to Asp47 is 3 X 4 AA approximate tandem repeats. In terms of domain architecture, Phosphatase tensin-type spans Ser55–Lys222. A Phosphoserine modification is found at Ser112. The Phosphocysteine intermediate role is filled by Cys164. Positions Phe228–Gln366 constitute a C2 tensin-type domain. The SH3-binding signature appears at Pro409–Pro417. The tract at residues Gln451–Lys776 is disordered. 2 positions are modified to phosphoserine: Ser453 and Ser456. Residues Ala506–Leu523 are compositionally biased toward polar residues. Over residues Ala554–Thr572 the composition is skewed to low complexity. Ser563 and Ser570 each carry phosphoserine. Residues Phe599–Val629 show a composition bias toward polar residues. Low complexity predominate over residues Ser654–His669. The 65-residue stretch at Thr849–Tyr913 folds into the J domain.

Forms a complex composed of HSPA8, CLTC and DNAJC6. Interacts with HSPA8/HSC70 in an ATP-dependent manner; this interaction stimulates the HSPA8's ATPase activity. Interacts with CLTC; this interaction produces a local change in heavy-chain contacts, creating a detectable global distortion of the clathrin coat. Interacts with AP2A2. Interacts with DNM1(GTP-bound form); this interaction allows clathrin-coated vesicle (CCV) formation at the plasma membrane. Phosphorylation at Ser-570 modulates its ability to bind CLTC and therefore the synaptic vesicle endocytosis (SVE). Post-translationally, the N-terminus is blocked. Expressed in various brain regions, including cerebellum, corpus callosum, cortex, striatum, brainstem, pons, putamen, spinal cord and substantia nigra. Very low expression in non-neural tissues such as leukocytes, liver, adipose tissue, skeletal muscle and bone marrow.

The protein resides in the cytoplasmic vesicle. The protein localises to the clathrin-coated vesicle. Functionally, may act as a protein phosphatase and/or a lipid phosphatase. Co-chaperone that recruits HSPA8/HSC70 to clathrin-coated vesicles (CCVs) and promotes the ATP-dependent dissociation of clathrin from CCVs and participates in clathrin-mediated endocytosis of synaptic vesicles and their recycling and also in intracellular trafficking. Firstly, binds tightly to the clathrin cages, at a ratio of one DNAJC6 per clathrin triskelion. The HSPA8:ATP complex then binds to the clathrin-auxilin cage, initially at a ratio of one HSPA8 per triskelion leading to ATP hydrolysis stimulation and causing a conformational change in the HSPA8. This cycle is repeated three times to drive to a complex containing the clathrin-auxilin cage associated to three HSPA8:ADP complex. The ATP hydrolysis of the third HSPA8:ATP complex leads to a concerted dismantling of the cage into component triskelia. Then, dissociates from the released triskelia and be recycled to initiate another cycle of HSPA8's recruitment. Also acts during the early steps of clathrin-coated vesicle (CCV) formation through its interaction with the GTP bound form of DNM1. The sequence is that of Auxilin from Homo sapiens (Human).